A 557-amino-acid chain; its full sequence is Membrane protein insertase YidC (557 aa).

5 helical membrane-spanning segments follow: residues 6-26, 219-239, 367-387, 437-457, and 514-534; these read TILW…WQVH, IGPF…IYTD, IVGN…LAFF, LGGC…YWVL, and MPIV…LYWV.

Belongs to the OXA1/ALB3/YidC family. Type 1 subfamily. As to quaternary structure, interacts with the Sec translocase complex via SecD. Specifically interacts with transmembrane segments of nascent integral membrane proteins during membrane integration.

The protein resides in the cell inner membrane. Functionally, required for the insertion and/or proper folding and/or complex formation of integral membrane proteins into the membrane. Involved in integration of membrane proteins that insert both dependently and independently of the Sec translocase complex, as well as at least some lipoproteins. Aids folding of multispanning membrane proteins. In Polynucleobacter asymbioticus (strain DSM 18221 / CIP 109841 / QLW-P1DMWA-1) (Polynucleobacter necessarius subsp. asymbioticus), this protein is Membrane protein insertase YidC.